Here is a 544-residue protein sequence, read N- to C-terminus: Methionine--tRNA ligase (544 aa).

Positions 10–20 match the 'HIGH' region motif; it reads PYANGSLHLGH. Zn(2+) is bound by residues Cys-141, Cys-144, Cys-153, and Cys-156. A 'KMSKS' region motif is present at residues 329 to 333; that stretch reads KLSTS. An ATP-binding site is contributed by Thr-332.

The protein belongs to the class-I aminoacyl-tRNA synthetase family. MetG type 1 subfamily. In terms of assembly, monomer. It depends on Zn(2+) as a cofactor.

The protein resides in the cytoplasm. It carries out the reaction tRNA(Met) + L-methionine + ATP = L-methionyl-tRNA(Met) + AMP + diphosphate. In terms of biological role, is required not only for elongation of protein synthesis but also for the initiation of all mRNA translation through initiator tRNA(fMet) aminoacylation. The sequence is that of Methionine--tRNA ligase from Bacillus cereus (strain Q1).